Reading from the N-terminus, the 230-residue chain is Ubiquitin carboxyl-terminal hydrolase isozyme L3 (230 aa).

Residues 5-229 (RWLPLEANPE…LRFNAIALSA (225 aa)) form the UCH catalytic domain. Positions 8–13 (PLEANP) are interaction with ubiquitin. Cysteine 95 acts as the Nucleophile in catalysis. Serine 130 is modified (phosphoserine). The interval 152-159 (AHEGQTEA) is interaction with ubiquitin. Crossover loop which restricts access of large ubiquitin adducts to the active site. The Proton donor role is filled by histidine 169. The interval 219-224 (ELRFNA) is interaction with ubiquitin.

This sequence belongs to the peptidase C12 family. As to quaternary structure, preferentially binds diubiquitin; the interaction does not hydrolyze diubiquitin but, in vitro, inhibits the hydrolyzing activity on other substrates.

It is found in the cytoplasm. The enzyme catalyses Thiol-dependent hydrolysis of ester, thioester, amide, peptide and isopeptide bonds formed by the C-terminal Gly of ubiquitin (a 76-residue protein attached to proteins as an intracellular targeting signal).. Its activity is regulated as follows. Inhibited by monoubiquitin and diubiquitin. Deubiquitinating enzyme (DUB) that controls levels of cellular ubiquitin through processing of ubiquitin precursors and ubiquitinated proteins. Thiol protease that recognizes and hydrolyzes a peptide bond at the C-terminal glycine of either ubiquitin or NEDD8. Has a 10-fold preference for Arg and Lys at position P3, and exhibits a preference towards 'Lys-48'-linked ubiquitin chains. Deubiquitinates ENAC in apical compartments, thereby regulating apical membrane recycling. Indirectly increases the phosphorylation of IGFIR, AKT and FOXO1 and promotes insulin-signaling and insulin-induced adipogenesis. Required for stress-response retinal, skeletal muscle and germ cell maintenance. May be involved in working memory. Can hydrolyze UBB(+1), a mutated form of ubiquitin which is not effectively degraded by the proteasome. In Sus scrofa (Pig), this protein is Ubiquitin carboxyl-terminal hydrolase isozyme L3 (UCHL3).